A 548-amino-acid polypeptide reads, in one-letter code: Telomerase Cajal body protein 1 (548 aa).

The disordered stretch occupies residues 1–142 (MKTLETQPLA…SGEPAAEDEG (142 aa)). A compositionally biased stretch (low complexity) spans 15-31 (PSDQDPAPAHPSPHASP). A phosphoserine mark is found at S26, S30, and S54. The residue at position 64 (S64) is a Phosphoserine; by ATM. Phosphoserine is present on residues S85, S90, S112, and S114. WD repeat units follow at residues 167-206 (QPENFLKGCKWAPDGSCILTNSADNILRIYNLPPELYHEG), 222-267 (EGDT…LRAS), 272-313 (NHLD…RDCE), 323-364 (GQSG…ALLG), 365-405 (GHQG…YPLW), and 411-450 (VTTNQRIYFDLDPTGQFLVSGSTSGAVSVWDTDGPGNDGK). T489 is subject to Phosphothreonine. S491 carries the post-translational modification Phosphoserine. The disordered stretch occupies residues 526–548 (SIPDDHQGEKGQGGTEGGVGELI). Gly residues predominate over residues 535–548 (KGQGGTEGGVGELI).

The protein belongs to the TCAB1 family. Component of the telomerase holoenzyme complex composed of one molecule of TERT, one molecule of WRAP53/TCAB1, two molecules of H/ACA ribonucleoprotein complex subunits DKC1, NOP10, NHP2 and GAR1, and a telomerase RNA template component (TERC). The telomerase holoenzyme complex is associated with TEP1, SMG6/EST1A and POT1. Interacts with the chaperonin-containing T-complex (TRiC) complex; which mediates the folding of WRAP53/TCAB1. Interacts with COIL. Interacts with SMN1. Interacts with RNF8. Interacts with histone H2AX. In terms of processing, phosphorylated at Ser-64 by ATM in response to DNA damage, promoting its interaction with histone H2AX and localization to sites of DNA double-strand breaks. In terms of tissue distribution, expressed in all tissues and cell lines examined.

The protein resides in the nucleus. It is found in the cajal body. It localises to the chromosome. Its subcellular location is the telomere. In terms of biological role, RNA chaperone that plays a key role in telomere maintenance and RNA localization to Cajal bodies. Specifically recognizes and binds the Cajal body box (CAB box) present in both small Cajal body RNAs (scaRNAs) and telomerase RNA template component (TERC). Essential component of the telomerase holoenzyme complex, a ribonucleoprotein complex essential for the replication of chromosome termini that elongates telomeres in most eukaryotes. In the telomerase holoenzyme complex, required to stimulate the catalytic activity of the complex. Acts by specifically binding the CAB box of the TERC RNA and controlling the folding of the CR4/CR5 region of the TERC RNA, a critical step for telomerase activity. In addition, also controls telomerase holoenzyme complex localization to Cajal body. During S phase, required for delivery of TERC to telomeres during S phase and for telomerase activity. In addition to its role in telomere maintenance, also required for Cajal body formation, probably by mediating localization of scaRNAs to Cajal bodies. Also plays a role in DNA repair: phosphorylated by ATM in response to DNA damage and relocalizes to sites of DNA double-strand breaks to promote the repair of DNA double-strand breaks. Acts by recruiting the ubiquitin ligase RNF8 to DNA breaks and promote both homologous recombination (HR) and non-homologous end joining (NHEJ). This Homo sapiens (Human) protein is Telomerase Cajal body protein 1.